Reading from the N-terminus, the 386-residue chain is Phosphoglycerate kinase (386 aa).

Residues 21 to 23 (DLN), arginine 36, 59 to 62 (HLGR), arginine 112, and arginine 145 contribute to the substrate site. Residues lysine 196, glutamate 313, and 339–342 (GGDT) each bind ATP.

The protein belongs to the phosphoglycerate kinase family. In terms of assembly, monomer.

The protein resides in the cytoplasm. It carries out the reaction (2R)-3-phosphoglycerate + ATP = (2R)-3-phospho-glyceroyl phosphate + ADP. The protein operates within carbohydrate degradation; glycolysis; pyruvate from D-glyceraldehyde 3-phosphate: step 2/5. The chain is Phosphoglycerate kinase from Haemophilus influenzae (strain 86-028NP).